The chain runs to 312 residues: Olfactory receptor 1F1 (312 aa).

Residues 1–25 are Extracellular-facing; sequence MSGTNQSSVSEFLLLGLSRQPQQQH. Asparagine 5 is a glycosylation site (N-linked (GlcNAc...) asparagine). The chain crosses the membrane as a helical span at residues 26–49; it reads LLFVFFLSMYLATVLGNLLIILSV. The Cytoplasmic portion of the chain corresponds to 50 to 57; the sequence is SIDSCLHT. The chain crosses the membrane as a helical span at residues 58–79; sequence PMYFFLSNLSFVDICFSFTTVP. The Extracellular portion of the chain corresponds to 80 to 100; that stretch reads KMLANHILETQTISFCGCLTQ. An intrachain disulfide couples cysteine 97 to cysteine 189. The chain crosses the membrane as a helical span at residues 101 to 120; that stretch reads MYFVFMFVDMDNFLLAVMAY. At 121-139 the chain is on the cytoplasmic side; the sequence is DHFVAVCHPLHYTAKMTHQ. The helical transmembrane segment at 140–158 threads the bilayer; that stretch reads LCALLVAGLWVVANLNVLL. The Extracellular portion of the chain corresponds to 159–196; the sequence is HTLLMAPLSFCADNAITHFFCDVTPLLKLSCSDTHLNE. A helical membrane pass occupies residues 197–219; sequence VIILSEGALVMITPFLCILASYM. At 220–236 the chain is on the cytoplasmic side; that stretch reads HITCTVLKVPSTKGRWK. Residues 237–259 traverse the membrane as a helical segment; the sequence is AFSTCGSHLAVVLLFYSTIIAVY. At 260-272 the chain is on the extracellular side; that stretch reads FNPLSSHSAEKDT. The helical transmembrane segment at 273–292 threads the bilayer; the sequence is MATVLYTVVTPMLNPFIYSL. Residues 293-312 lie on the Cytoplasmic side of the membrane; it reads RNRYLKGALKKVVGRVVFSV.

Belongs to the G-protein coupled receptor 1 family.

The protein localises to the cell membrane. Its function is as follows. Odorant receptor. This chain is Olfactory receptor 1F1 (OR1F1), found in Homo sapiens (Human).